A 128-amino-acid chain; its full sequence is Small ribosomal subunit protein uS11 (128 aa).

It belongs to the universal ribosomal protein uS11 family. Part of the 30S ribosomal subunit. Interacts with proteins S7 and S18. Binds to IF-3.

Functionally, located on the platform of the 30S subunit, it bridges several disparate RNA helices of the 16S rRNA. Forms part of the Shine-Dalgarno cleft in the 70S ribosome. The sequence is that of Small ribosomal subunit protein uS11 from Solidesulfovibrio magneticus (strain ATCC 700980 / DSM 13731 / RS-1) (Desulfovibrio magneticus).